Consider the following 278-residue polypeptide: HTH-type transcriptional activator RhaS (278 aa).

One can recognise an HTH araC/xylS-type domain in the interval N174–G272. DNA-binding regions (H-T-H motif) lie at residues D191–T212 and V239–F262.

Binds DNA as a dimer.

Its subcellular location is the cytoplasm. Its function is as follows. Activates expression of the rhaBAD and rhaT operons. This chain is HTH-type transcriptional activator RhaS, found in Escherichia coli O6:H1 (strain CFT073 / ATCC 700928 / UPEC).